Here is a 165-residue protein sequence, read N- to C-terminus: Cyclic pyranopterin monophosphate synthase (165 aa).

Residues 75-77 and 115-116 each bind substrate; these read MCH and ME. Asp-130 is an active-site residue.

The protein belongs to the MoaC family. As to quaternary structure, homohexamer; trimer of dimers.

It catalyses the reaction (8S)-3',8-cyclo-7,8-dihydroguanosine 5'-triphosphate = cyclic pyranopterin phosphate + diphosphate. Its pathway is cofactor biosynthesis; molybdopterin biosynthesis. Its function is as follows. Catalyzes the conversion of (8S)-3',8-cyclo-7,8-dihydroguanosine 5'-triphosphate to cyclic pyranopterin monophosphate (cPMP). The sequence is that of Cyclic pyranopterin monophosphate synthase from Halalkalibacterium halodurans (strain ATCC BAA-125 / DSM 18197 / FERM 7344 / JCM 9153 / C-125) (Bacillus halodurans).